We begin with the raw amino-acid sequence, 191 residues long: Outer membrane lipoprotein DolP (191 aa).

A signal peptide spans 1–18 (MKAFSPLAVLISALLLQG). Cysteine 19 carries N-palmitoyl cysteine lipidation. The S-diacylglycerol cysteine moiety is linked to residue cysteine 19. 2 consecutive BON domains span residues 46–115 (DDGT…RQGQ) and 124–191 (NDTW…TYIK).

This sequence belongs to the lipoprotein DolP family.

It localises to the cell outer membrane. Its function is as follows. Plays an important role in maintaining outer membrane integrity. Contributes to virulence. The protein is Outer membrane lipoprotein DolP of Salmonella typhimurium (strain LT2 / SGSC1412 / ATCC 700720).